Reading from the N-terminus, the 71-residue chain is UPF0346 protein BCB4264_A2283 (71 aa).

The protein belongs to the UPF0346 family.

The protein is UPF0346 protein BCB4264_A2283 of Bacillus cereus (strain B4264).